Consider the following 164-residue polypeptide: Diphosphoinositol polyphosphate phosphohydrolase 3-beta (164 aa).

Residues R9, 17 to 19, and 38 to 40 each bind substrate; these read KKR and SSR. Residues 17 to 144 enclose the Nudix hydrolase domain; the sequence is KKRAACLCFR…VHAEYLQKLK (128 aa). Residues G49 and E65 each coordinate Mg(2+). A Nudix box motif is present at residues 50–71; sequence GGMEPEEEPGGAAVREVFEEAG. The active-site Proton acceptor is the E68. E69 lines the Mg(2+) pocket. Residues 89 to 91, R115, and K133 contribute to the substrate site; that span reads RKH. The tract at residues 144-164 is disordered; the sequence is KLGGSPTNGNSVAPSPPEGDP.

The protein belongs to the Nudix hydrolase family. DIPP subfamily. Mg(2+) serves as cofactor. Requires Mn(2+) as cofactor.

Its subcellular location is the cytoplasm. The catalysed reaction is diphospho-myo-inositol polyphosphate + H2O = myo-inositol polyphosphate + phosphate.. It carries out the reaction P(1),P(6)-bis(5'-adenosyl) hexaphosphate + H2O = adenosine 5'-pentaphosphate + AMP + 2 H(+). The enzyme catalyses P(1),P(5)-bis(5'-adenosyl) pentaphosphate + H2O = adenosine 5'-tetraphosphate + AMP + 2 H(+). Functionally, cleaves a beta-phosphate from the diphosphate groups in PP-InsP5 (diphosphoinositol pentakisphosphate), suggesting that it may play a role in signal transduction. Also able to catalyze the hydrolysis of dinucleoside oligophosphates, with Ap6A and Ap5A being the preferred substrates. The major reaction products are ADP and p4a from Ap6A and ADP and ATP from Ap5A. Also able to hydrolyze 5-phosphoribose 1-diphosphate. This Bos taurus (Bovine) protein is Diphosphoinositol polyphosphate phosphohydrolase 3-beta.